Consider the following 1499-residue polypeptide: Tyrosine-protein phosphatase non-receptor type 23 (1499 aa).

The BRO1 domain occupies 1-219 (LNVNLMLGQA…AKIEDKNEVL (219 aa)). TPR repeat units follow at residues 75–108 (AVAH…LNEA) and 199–232 (EEKA…DPDT). Coiled-coil stretches lie at residues 278–305 (EASL…LGQA), 377–464 (KAVL…NVQY), and 506–537 (YADL…LLDR). 2 disordered regions span residues 536 to 583 (DREL…MMAG) and 718 to 1006 (HMAL…LLQP). The tract at residues 598–993 (HFSPGPFPGS…SSSPESQHGG (396 aa)) is his. Residues 724 to 752 (GPAPAPPQPCFPVPQPVPQSVPQPQPLPT) show a composition bias toward pro residues. The segment covering 754–763 (YTYSIGTKQH) has biased composition (polar residues). The residue at position 785 (R785) is an Omega-N-methylarginine. 4 stretches are compositionally biased toward pro residues: residues 785-827 (RIGP…PQPQ), 856-866 (LTPPPPYPFTP), 900-909 (FPSPGPPHPH), and 934-972 (GPPP…PPPC). 20 consecutive repeat copies span residues 788–789 (PQ), 790–791 (PP), 792–793 (PQ), 794–795 (LQ), 796–797 (PQ), 798–799 (PQ), 800–801 (PQ), 802–803 (PQ), 804–805 (PQ), 806–807 (PP), 808–809 (PQ), 810–811 (PQ), 812–813 (PQ), 814–815 (PQ), 816–817 (PQ), 818–819 (PQ), 820–821 (PQ), 822–823 (PQ), 824–825 (PQ), and 826–827 (PQ). Positions 788 to 827 (PQPPPQLQPQPQPQPQPQPPPQPQPQPQPQPQPQPQPQPQ) are 20 X 2 AA approximate tandem repeats of P-Q. Residues S985 and S986 each carry the phosphoserine modification. T994 carries the phosphothreonine modification. Positions 1055–1315 (DAVWRELQEA…KFCHEALVRH (261 aa)) constitute a Tyrosine-protein phosphatase domain. The active-site Phosphocysteine intermediate is the C1255. Disordered regions lie at residues 1322–1351 (RHGV…QDLV) and 1381–1499 (ASLP…LNKT). Polar residues predominate over residues 1335–1348 (MSVSQKSHLPQDSQ). Residues 1390–1419 (PGLPPASLPEPTPAPPSSPPPPSSPLPEPP) are compositionally biased toward pro residues. Residues 1427–1450 (VPEAPSLGPPSSSLELLASLTPEA) show a composition bias toward low complexity. Over residues 1464–1473 (SKQNFLQAHN) the composition is skewed to polar residues. Omega-N-methylarginine is present on R1478. A compositionally biased stretch (low complexity) spans 1482–1499 (PTDDPLSLLDPLWTLNKT).

It belongs to the protein-tyrosine phosphatase family. Non-receptor class subfamily. As to quaternary structure, interacts with GRAP2 and GRB2. Interacts with UBAP1 and CHMP4B. Ubiquitously expressed, with highest levels in brain, testis and kidney, and lowest levels in skeletal muscle.

Its subcellular location is the nucleus. It localises to the cytoplasm. The protein resides in the cytoplasmic vesicle. It is found in the endosome. The protein localises to the cytoskeleton. Its subcellular location is the cilium basal body. It catalyses the reaction O-phospho-L-tyrosyl-[protein] + H2O = L-tyrosyl-[protein] + phosphate. In terms of biological role, plays a role in sorting of endocytic ubiquitinated cargos into multivesicular bodies (MVBs) via its interaction with the ESCRT-I complex (endosomal sorting complex required for transport I), and possibly also other ESCRT complexes. May act as a negative regulator of Ras-mediated mitogenic activity. Plays a role in ciliogenesis. This chain is Tyrosine-protein phosphatase non-receptor type 23 (Ptpn23), found in Rattus norvegicus (Rat).